The chain runs to 91 residues: Conotoxin VnMKLT1-021 (91 aa).

The signal sequence occupies residues 1-22; it reads MKLTCVMIVAVLFLTAWTFVTA. A propeptide spanning residues 23-57 is cleaved from the precursor; the sequence is DDPRDGPDTAVGWRKLFSEARDEMKNREASKLNER. Cystine bridges form between Cys59–Cys78, Cys66–Cys82, and Cys77–Cys86.

The protein belongs to the conotoxin O1 superfamily. In terms of tissue distribution, expressed by the venom duct.

The protein resides in the secreted. The protein is Conotoxin VnMKLT1-021 of Conus ventricosus (Mediterranean cone).